A 571-amino-acid polypeptide reads, in one-letter code: RUN and FYVE domain-containing protein 4 (571 aa).

The region spanning 33–166 (TDTSAELHRL…VAFELDLQQP (134 aa)) is the RUN domain. Residues 174–207 (MFSESRCSSSTQTQGRRPRKNKDAPKKIPAAYGG) are disordered. Residues 178-188 (SRCSSSTQTQG) show a composition bias toward polar residues. The stretch at 408-481 (EVSLQDEIKS…ERRDAMYQEE (74 aa)) forms a coiled coil. Residues 474–567 (RDAMYQEELG…CCPPCAQGRE (94 aa)) form an FYVE-type zinc finger. Zn(2+) contacts are provided by C521, C524, C537, C540, C545, C548, C559, and C562.

Forms homodimers (via coiled coil domain). Interacts with RAB7A. Forms a ternary complex with RAB7A and LAMP2; the interaction with RAB7A is mediated by RUFY4 (via RUN and coiled coil domains). Interacts with GTP-, but not GDP-bound ARL8A and ARL8B. Interacts with dynactin/DCTN1 and the dynein intermediate chain DYNC1I1/2.

Its subcellular location is the cytoplasmic vesicle. The protein resides in the autophagosome. The protein localises to the lysosome. In terms of biological role, ARL8 effector that promotes the coupling of endolysosomes to dynein-dynactin for retrograde transport along microtubules. Acts by binding both GTP-bound ARL8 and dynein-dynactin. In nonneuronal cells, promotes concentration of endolysosomes in the juxtanuclear area. In hippocampal neurons, drives retrograde transport of endolysosomes from the axon to the soma. Positive regulator of macroautophagy in dendritic cells. Increases autophagic flux, probably by stimulating both autophagosome formation and facilitating tethering with lysosomes. Binds to phosphatidylinositol 3-phosphate (PtdIns3P) through its FYVE-type zinc finger. Positive regulator of osteosclast bone-resorbing activity, possibly by promoting late endosome-lysosome fusion by acting as an adapter protein between RAB7A on late endosomes and LAMP2 on primary lysosomes. The chain is RUN and FYVE domain-containing protein 4 (RUFY4) from Homo sapiens (Human).